The following is a 178-amino-acid chain: UPF0228 protein MA_4223 (178 aa).

Belongs to the UPF0228 family.

This is UPF0228 protein MA_4223 from Methanosarcina acetivorans (strain ATCC 35395 / DSM 2834 / JCM 12185 / C2A).